Consider the following 232-residue polypeptide: Small ribosomal subunit protein uS2 (232 aa).

Belongs to the universal ribosomal protein uS2 family.

The chain is Small ribosomal subunit protein uS2 from Desulforamulus reducens (strain ATCC BAA-1160 / DSM 100696 / MI-1) (Desulfotomaculum reducens).